The chain runs to 138 residues: Transcription factor Atoh7-b (138 aa).

A bHLH domain is found at Lys33 to Leu85.

The protein resides in the nucleus. It is found in the perikaryon. Its subcellular location is the cell projection. The protein localises to the axon. In terms of biological role, transcription factor that binds to DNA at the consensus sequence 5'-CAG[GC]TG-3'. Positively regulates the determination of retinal ganglion cell fate and formation of the optic nerve and retino-hypothalamic tract. Required for retinal circadian rhythm photoentrainment. Plays a role in brainstem auditory signaling and binaural processing. Regulates the differentiation of olfactory receptor neurons. During retinal neurogenesis, activates the transcription of several genes such as brn3d, coe3, cbfa2t2, glis2, elrC and xgadd45-gamma. The sequence is that of Transcription factor Atoh7-b from Xenopus laevis (African clawed frog).